We begin with the raw amino-acid sequence, 260 residues long: uncharacterized protein (260 aa).

Positions 7 to 67 (VPALTRAIDI…DHQENFCLWT (61 aa)) constitute an HTH iclR-type domain. The segment at residues 28 to 47 (AATIIDTLGIPKSTAYLLLN) is a DNA-binding region (H-T-H motif). The region spanning 82–251 (LRELARPRLT…ARDISRLLGW (170 aa)) is the IclR-ED domain.

This is an uncharacterized protein from Escherichia coli (strain K12).